Consider the following 268-residue polypeptide: MSSRAIGAPQEGADMKNKAARLGTYTNWPVQFLEPSRMAASGFYYLGRGDEVRCAFCKVEITNWVRGDDPETDHKRWAPQCPFVRNNAHDTPHDRAPPARSAAAHPQYATEAARLRTFAEWPRGLKQRPEELAEAGFFYTGQGDKTRCFCCDGGLKDWEPDDAPWQQHARWYDRCEYVLLVKGRDFVQRVMTEACVVRDADNEPHIERPAVEAEVADDRLCKICLGAEKTVCFVPCGHVVACGKCAAGVTTCPVCRGQLDKAVRMYQV.

2 BIR repeats span residues 18–84 (KAAR…CPFV) and 111–178 (EAAR…CEYV). The Zn(2+) site is built by C148, C151, H168, and C175. The RING-type zinc-finger motif lies at 221–256 (CKICLGAEKTVCFVPCGHVVACGKCAAGVTTCPVCR).

It belongs to the IAP family. In terms of processing, auto-ubiquitinated.

The catalysed reaction is S-ubiquitinyl-[E2 ubiquitin-conjugating enzyme]-L-cysteine + [acceptor protein]-L-lysine = [E2 ubiquitin-conjugating enzyme]-L-cysteine + N(6)-ubiquitinyl-[acceptor protein]-L-lysine.. Its function is as follows. RING-finger E3 ubiquitin ligase required to prevent cellular apoptosis in infected cells. Ubiquitinates and subsequently targets host pro-apoptotic cellular proteins such as HID for degradation by the proteasome. This is E3 ubiquitin-protein ligase IAP-3 (IAP3) from Orgyia pseudotsugata multicapsid polyhedrosis virus (OpMNPV).